The chain runs to 294 residues: MRFVIVTGLSGAGKTQAIRSLEDLGFFCVDNLPPTLIPKFAEACYQTEGKIKKIALVIDIRGGKFFDDLFESLKYLKEEGYKYEILFLDASDEVLIKRFKESRRKHPLSPDGRILNGISMERNRLREVKDRADNIINTSELATRELREAINEIYGEHDQIENQLIITVLSFGFKHGIPLDSDLVFDVRFLPNPYYIKELKQYSGKDKKVSDYVMSFDVTNKFVNRLEDMLDFLIPNYFKEGKRQLIISIGCTGGRHRSVAIANAIYEGLKSKGHKVNIDHRDINEDIHKGGKKL.

8-15 (GLSGAGKT) lines the ATP pocket. 59–62 (DIRG) contacts GTP.

This sequence belongs to the RapZ-like family.

Functionally, displays ATPase and GTPase activities. The polypeptide is Nucleotide-binding protein CLD_1131 (Clostridium botulinum (strain Okra / Type B1)).